A 437-amino-acid polypeptide reads, in one-letter code: Proline--tRNA ligase (437 aa).

Belongs to the class-II aminoacyl-tRNA synthetase family. ProS type 2 subfamily. Homodimer.

Its subcellular location is the cytoplasm. The enzyme catalyses tRNA(Pro) + L-proline + ATP = L-prolyl-tRNA(Pro) + AMP + diphosphate. Its function is as follows. Catalyzes the attachment of proline to tRNA(Pro) in a two-step reaction: proline is first activated by ATP to form Pro-AMP and then transferred to the acceptor end of tRNA(Pro). This is Proline--tRNA ligase from Acidiphilium cryptum (strain JF-5).